The following is an 89-amino-acid chain: Protein M7 (89 aa).

An N-terminal signal peptide occupies residues 1–25 (MAAMKSLATAILVVLLLRRLPRGLS). Intrachain disulfides connect C28–C65, C38–C54, C55–C80, and C67–C87.

It belongs to the A9/FIL1 family. In terms of tissue distribution, tapetum of anthers.

Its subcellular location is the secreted. This chain is Protein M7 (M7), found in Lilium henryi (Henry's lily).